The sequence spans 410 residues: Lissencephaly-1 homolog (410 aa).

Residues 7–39 form the LisH domain; the sequence is QRDELNRAIADYLRSNGYEEAYSVFKKEAELDM. Positions 56 to 82 form a coiled coil; it reads TSVIRLQKKVMELESKLNEAKEEFTSG. 7 WD repeats span residues 106 to 147, 148 to 189, 190 to 229, 232 to 271, 274 to 333, 336 to 377, and 379 to 410; these read GHRS…RTLK, GHTD…RTMH, GHDH…CVKT, GHRE…CKAE, EHEH…CLMT, GHDN…KTLN, and HEHF…WECR.

This sequence belongs to the WD repeat LIS1/nudF family. In terms of assembly, can self-associate. Component of the cytosolic PAF-AH (I) heterotetrameric enzyme, which is composed of PAFAH1B1 (beta), PAFAH1B2 (alpha2) and PAFAH1B3 (alpha1) subunits. The catalytic activity of the enzyme resides in the alpha1 (PAFAH1B3) and alpha2 (PAFAH1B2) subunits, whereas the beta subunit (PAFAH1B1) has regulatory activity. Trimer formation is not essential for the catalytic activity. Interacts with dynein, dynactin, nde1 and ndel1.

It is found in the cytoplasm. The protein resides in the cytoskeleton. It localises to the microtubule organizing center. The protein localises to the centrosome. Its function is as follows. Regulatory subunit (beta subunit) of the cytosolic type I platelet-activating factor (PAF) acetylhydrolase (PAF-AH (I)), an enzyme that catalyzes the hydrolyze of the acetyl group at the sn-2 position of PAF and its analogs and participates in PAF inactivation. Regulates the PAF-AH (I) activity in a catalytic dimer composition-dependent manner. Positively regulates the activity of the minus-end directed microtubule motor protein dynein. May enhance dynein-mediated microtubule sliding by targeting dynein to the microtubule plus end. Required for several dynein- and microtubule-dependent processes such as the maintenance of Golgi integrity, the peripheral transport of microtubule fragments and the coupling of the nucleus and centrosome. May be required for proliferation of neuronal precursors and neuronal migration. This is Lissencephaly-1 homolog (pafah1b1) from Xenopus laevis (African clawed frog).